The primary structure comprises 198 residues: Dual specificity protein phosphatase 14 (198 aa).

A Tyrosine-protein phosphatase domain is found at 26–167 (GIAQITSSLF…LIDYERQLFG (142 aa)). Cys111 (phosphocysteine intermediate) is an active-site residue.

It belongs to the protein-tyrosine phosphatase family. Non-receptor class dual specificity subfamily. Interacts with CD28.

It carries out the reaction O-phospho-L-tyrosyl-[protein] + H2O = L-tyrosyl-[protein] + phosphate. It catalyses the reaction O-phospho-L-seryl-[protein] + H2O = L-seryl-[protein] + phosphate. The enzyme catalyses O-phospho-L-threonyl-[protein] + H2O = L-threonyl-[protein] + phosphate. In terms of biological role, involved in the inactivation of MAP kinases. Dephosphorylates ERK, JNK and p38 MAP-kinases. Plays a negative role in TCR signaling by dephosphorylating MAP3K7 adapter TAB1 leading to its inactivation. The polypeptide is Dual specificity protein phosphatase 14 (DUSP14) (Bos taurus (Bovine)).